The following is a 266-amino-acid chain: Large ribosomal subunit protein eL8 (266 aa).

Glycyl lysine isopeptide (Lys-Gly) (interchain with G-Cter in SUMO2) cross-links involve residues Lys11, Lys20, and Lys21. Position 34 is an N6-acetyllysine (Lys34). Residue Lys48 forms a Glycyl lysine isopeptide (Lys-Gly) (interchain with G-Cter in SUMO2) linkage. N6-acetyllysine; alternate is present on Lys97. Lys97 is covalently cross-linked (Glycyl lysine isopeptide (Lys-Gly) (interchain with G-Cter in SUMO2); alternate). Lys125 participates in a covalent cross-link: Glycyl lysine isopeptide (Lys-Gly) (interchain with G-Cter in SUMO2). Lys217 bears the N6-acetyllysine mark. Lys245 is covalently cross-linked (Glycyl lysine isopeptide (Lys-Gly) (interchain with G-Cter in SUMO2)).

This sequence belongs to the eukaryotic ribosomal protein eL8 family. In terms of assembly, component of the large ribosomal subunit. Interacts with CRY1. Interacts with DICER1, AGO2, TARBP2, MOV10 and EIF6; they form a large RNA-induced silencing complex (RISC).

The protein resides in the cytoplasm. Component of the large ribosomal subunit. The ribosome is a large ribonucleoprotein complex responsible for the synthesis of proteins in the cell. The polypeptide is Large ribosomal subunit protein eL8 (Rpl7a) (Mus musculus (Mouse)).